Consider the following 759-residue polypeptide: DNA topoisomerase 4 subunit A (759 aa).

Residues 44 to 516 (LPDVRDGLKP…VFGEAPQVDA (473 aa)) enclose the Topo IIA-type catalytic domain. Tyr-132 acts as the O-(5'-phospho-DNA)-tyrosine intermediate in catalysis.

This sequence belongs to the type II topoisomerase GyrA/ParC subunit family. ParC type 1 subfamily. As to quaternary structure, heterotetramer composed of ParC and ParE.

It localises to the cell membrane. It catalyses the reaction ATP-dependent breakage, passage and rejoining of double-stranded DNA.. In terms of biological role, topoisomerase IV is essential for chromosome segregation. It relaxes supercoiled DNA. Performs the decatenation events required during the replication of a circular DNA molecule. The sequence is that of DNA topoisomerase 4 subunit A from Caulobacter vibrioides (strain ATCC 19089 / CIP 103742 / CB 15) (Caulobacter crescentus).